The primary structure comprises 55 residues: Large ribosomal subunit protein bL33 (55 aa).

The protein belongs to the bacterial ribosomal protein bL33 family.

This is Large ribosomal subunit protein bL33 from Rhizobium etli (strain CIAT 652).